The chain runs to 445 residues: Tubulin beta-7 chain (445 aa).

GTP is bound by residues Gln-11, Glu-69, Ser-138, Gly-142, Thr-143, Gly-144, Asn-204, and Asn-226. Glu-69 contributes to the Mg(2+) binding site. Positions 421-445 (EYQQYQDATAEDEEYEEEEEEEEET) are disordered. Positions 429–445 (TAEDEEYEEEEEEEEET) are enriched in acidic residues.

This sequence belongs to the tubulin family. Dimer of alpha and beta chains. A typical microtubule is a hollow water-filled tube with an outer diameter of 25 nm and an inner diameter of 15 nM. Alpha-beta heterodimers associate head-to-tail to form protofilaments running lengthwise along the microtubule wall with the beta-tubulin subunit facing the microtubule plus end conferring a structural polarity. Microtubules usually have 13 protofilaments but different protofilament numbers can be found in some organisms and specialized cells. Mg(2+) is required as a cofactor.

It localises to the cytoplasm. The protein resides in the cytoskeleton. Functionally, tubulin is the major constituent of microtubules, a cylinder consisting of laterally associated linear protofilaments composed of alpha- and beta-tubulin heterodimers. Microtubules grow by the addition of GTP-tubulin dimers to the microtubule end, where a stabilizing cap forms. Below the cap, tubulin dimers are in GDP-bound state, owing to GTPase activity of alpha-tubulin. This Zea mays (Maize) protein is Tubulin beta-7 chain (TUBB7).